A 269-amino-acid polypeptide reads, in one-letter code: Putative 12-oxophytodienoate reductase-like protein 2A (269 aa).

FMN contacts are provided by residues 28-30 (PLT) and Q103. A substrate-binding site is contributed by 175–178 (HGAH). Y180 serves as the catalytic Proton donor. Position 227 (R227) interacts with FMN.

The protein belongs to the NADH:flavin oxidoreductase/NADH oxidase family. The cofactor is FMN.

Functionally, putative oxophytodienoate reductase that may be involved in the biosynthesis or metabolism of oxylipin signaling molecules. This is Putative 12-oxophytodienoate reductase-like protein 2A from Arabidopsis thaliana (Mouse-ear cress).